The following is a 930-amino-acid chain: Translation initiation factor IF-2 (930 aa).

The span at 50–67 (FKPAAAPKVEAKPAAPKV) shows a compositional bias: low complexity. 2 disordered regions span residues 50–217 (FKPA…SSEE) and 260–346 (EVVP…HELP). 2 stretches are compositionally biased toward basic and acidic residues: residues 68 to 90 (SAEK…EAKP) and 110 to 125 (FKAE…AERR). Residues 129–141 (KGNNRDQQQNGNR) show a composition bias toward low complexity. 2 stretches are compositionally biased toward basic and acidic residues: residues 157–167 (RDNRRFNDQAK) and 262–295 (VPEK…DGPR). Positions 309–318 (NQKNSNWNNN) are enriched in low complexity. Residues 337–346 (VTERKFHELP) show a composition bias toward basic and acidic residues. In terms of domain architecture, tr-type G spans 432 to 599 (ERPPVVTIMG…TVLLVAEIQE (168 aa)). A G1 region spans residues 441–448 (GHVDHGKT). 441–448 (GHVDHGKT) is a GTP binding site. A G2 region spans residues 466–470 (GITQH). A G3 region spans residues 487 to 490 (DTPG). GTP is bound by residues 487 to 491 (DTPGH) and 541 to 544 (NKID). The G4 stretch occupies residues 541–544 (NKID). Residues 577 to 579 (SAK) form a G5 region.

Belongs to the TRAFAC class translation factor GTPase superfamily. Classic translation factor GTPase family. IF-2 subfamily.

The protein resides in the cytoplasm. In terms of biological role, one of the essential components for the initiation of protein synthesis. Protects formylmethionyl-tRNA from spontaneous hydrolysis and promotes its binding to the 30S ribosomal subunits. Also involved in the hydrolysis of GTP during the formation of the 70S ribosomal complex. The sequence is that of Translation initiation factor IF-2 from Streptococcus pneumoniae (strain ATCC 700669 / Spain 23F-1).